A 196-amino-acid polypeptide reads, in one-letter code: ECF RNA polymerase sigma factor SigM (196 aa).

The segment at 39–105 (LFRRHHRQLH…ACLDRLRRAK (67 aa)) is sigma-70 factor domain-2. The Interaction with polymerase core subunit RpoC motif lies at 63-66 (DALQ). The segment at 130 to 181 (AVQRALMRLPVEQRAAVVAVDMQGYSIADTARMLGVAEGTVKSRCARARARL) is sigma-70 factor domain-4. A DNA-binding region (H-T-H motif) is located at residues 156-175 (IADTARMLGVAEGTVKSRCA).

This sequence belongs to the sigma-70 factor family. ECF subfamily. Interacts transiently with the RNA polymerase catalytic core formed by RpoA, RpoB, RpoC and RpoZ (2 alpha, 1 beta, 1 beta' and 1 omega subunit) to form the RNA polymerase holoenzyme that can initiate transcription. Interacts (via sigma-70 factor domain 4) with anti-sigma-M factor RsmA.

Its function is as follows. Sigma factors are initiation factors that promote the attachment of RNA polymerase to specific initiation sites and are then released. Extracytoplasmic function (ECF) sigma factors are held in an inactive form by an anti-sigma factor until released by regulated intramembrane proteolysis. The polypeptide is ECF RNA polymerase sigma factor SigM (sigM) (Mycobacterium tuberculosis (strain ATCC 35801 / TMC 107 / Erdman)).